A 347-amino-acid polypeptide reads, in one-letter code: Cytoplasmic tRNA 2-thiolation protein 1 (347 aa).

Ser-200 is modified (phosphoserine). The disordered stretch occupies residues Leu-315–Phe-347.

It belongs to the TtcA family. CTU1/NCS6/ATPBD3 subfamily. As to quaternary structure, component of a complex at least composed of URM1, CTU2/NCS2 and CTU1/ATPBD3. May form a heterodimer with CTU2/NCS2.

The protein localises to the cytoplasm. Its pathway is tRNA modification; 5-methoxycarbonylmethyl-2-thiouridine-tRNA biosynthesis. In terms of biological role, plays a central role in 2-thiolation of mcm(5)S(2)U at tRNA wobble positions of tRNA(Lys), tRNA(Glu) and tRNA(Gln). Directly binds tRNAs and probably acts by catalyzing adenylation of tRNAs, an intermediate required for 2-thiolation. It is unclear whether it acts as a sulfurtransferase that transfers sulfur from thiocarboxylated URM1 onto the uridine of tRNAs at wobble position. This Bos taurus (Bovine) protein is Cytoplasmic tRNA 2-thiolation protein 1.